We begin with the raw amino-acid sequence, 686 residues long: Bromodomain-containing factor 1 (686 aa).

2 disordered regions span residues 1-69 (MTDI…PAGL) and 85-150 (NGYN…NPIP). Residues 9-25 (NDVDVNGNNVNDDVSSN) are compositionally biased toward low complexity. Over residues 99 to 120 (QGLKKEEGGQGTKQEDLDENSK) the composition is skewed to basic and acidic residues. Pro residues predominate over residues 130–139 (EPAPAPPPEP). The 110-residue stretch at 145-254 (PQNPIPKHQQ…ASFEKHMLNM (110 aa)) folds into the Bromo 1 domain. Phosphoserine is present on S270. The disordered stretch occupies residues 283–304 (QTHNGRPKRTIHPPKSKDIYPY). Residues 287–296 (GRPKRTIHPP) are compositionally biased toward basic residues. One can recognise a Bromo 2 domain in the interval 312 to 421 (KRLQQAMKFC…EVFNSKWADR (110 aa)). Disordered stretches follow at residues 424 to 447 (LDDY…SEYS), 486 to 523 (IRKE…KKNK), 594 to 636 (SSGA…EQSR), and 649 to 686 (DSAS…SEEE). At S429 the chain carries Phosphoserine. The segment covering 438–447 (DYDDYESEYS) has biased composition (acidic residues). Residues 460–499 (AIQYLEEQLARMKVELQQLKKQELEKIRKERRLARGSKKR) adopt a coiled-coil conformation. The span at 488-507 (KERRLARGSKKRGKRSKGRS) shows a compositional bias: basic residues. Positions 518–598 (RDKKNKLKTV…RQYESSSGAS (81 aa)) constitute an NET domain. 2 stretches are compositionally biased toward polar residues: residues 594-620 (SSGA…TSAG) and 652-671 (SPLS…HNGF). 2 positions are modified to phosphoserine: S615 and S659. Residues 675 to 686 (SDDDVSSESEEE) show a composition bias toward acidic residues.

Belongs to the BET family. Interacts with the TFIID subunit TAF7 and with acetylated histones H3 and H4. Post-translationally, phosphorylated by the casein kinase CK2 complex.

The protein resides in the nucleus. Transcription factor involved in the expression of a broad class of genes including snRNAs. Required for sporulation and DNA-damage repair. Prevents the spreading of SIR silencing at telomeres and protects histone H4, but not H3, from deacetylation. The sequence is that of Bromodomain-containing factor 1 (BDF1) from Saccharomyces cerevisiae (strain ATCC 204508 / S288c) (Baker's yeast).